The primary structure comprises 537 residues: Eukaryotic translation initiation factor 3 subunit L (537 aa).

In terms of domain architecture, PCI spans Thr-301–His-513.

Belongs to the eIF-3 subunit L family. As to quaternary structure, component of the eukaryotic translation initiation factor 3 (eIF-3) complex.

Its subcellular location is the cytoplasm. Functionally, component of the eukaryotic translation initiation factor 3 (eIF-3) complex, which is involved in protein synthesis of a specialized repertoire of mRNAs and, together with other initiation factors, stimulates binding of mRNA and methionyl-tRNAi to the 40S ribosome. The eIF-3 complex specifically targets and initiates translation of a subset of mRNAs involved in cell proliferation. In Aedes aegypti (Yellowfever mosquito), this protein is Eukaryotic translation initiation factor 3 subunit L.